The following is a 219-amino-acid chain: Protein-L-isoaspartate O-methyltransferase (219 aa).

Serine 66 is an active-site residue.

The protein belongs to the methyltransferase superfamily. L-isoaspartyl/D-aspartyl protein methyltransferase family.

The protein localises to the cytoplasm. It catalyses the reaction [protein]-L-isoaspartate + S-adenosyl-L-methionine = [protein]-L-isoaspartate alpha-methyl ester + S-adenosyl-L-homocysteine. Functionally, catalyzes the methyl esterification of L-isoaspartyl residues in peptides and proteins that result from spontaneous decomposition of normal L-aspartyl and L-asparaginyl residues. It plays a role in the repair and/or degradation of damaged proteins. This is Protein-L-isoaspartate O-methyltransferase from Xanthobacter autotrophicus (strain ATCC BAA-1158 / Py2).